The primary structure comprises 205 residues: Adenylate kinase (205 aa).

10-15 (GAGKGT) is a binding site for ATP. The segment at 30–59 (STGDMLRAAVAQGSEVGKVAEGIMARGELV) is NMP. AMP-binding positions include T31, R36, 57–59 (ELV), 85–88 (GFPR), and Q92. The LID stretch occupies residues 126-139 (TRAAETAGGPRADD). R127 contacts ATP. 2 residues coordinate AMP: R136 and R147. K175 lines the ATP pocket.

This sequence belongs to the adenylate kinase family. As to quaternary structure, monomer.

Its subcellular location is the cytoplasm. The enzyme catalyses AMP + ATP = 2 ADP. It functions in the pathway purine metabolism; AMP biosynthesis via salvage pathway; AMP from ADP: step 1/1. In terms of biological role, catalyzes the reversible transfer of the terminal phosphate group between ATP and AMP. Plays an important role in cellular energy homeostasis and in adenine nucleotide metabolism. The protein is Adenylate kinase of Parvibaculum lavamentivorans (strain DS-1 / DSM 13023 / NCIMB 13966).